A 335-amino-acid polypeptide reads, in one-letter code: Flagellar P-ring protein (335 aa).

The signal sequence occupies residues 1–17 (MNKPMLMLITFATSLLA).

The protein belongs to the FlgI family. In terms of assembly, the basal body constitutes a major portion of the flagellar organelle and consists of four rings (L,P,S, and M) mounted on a central rod.

The protein resides in the periplasm. Its subcellular location is the bacterial flagellum basal body. Functionally, assembles around the rod to form the L-ring and probably protects the motor/basal body from shearing forces during rotation. The polypeptide is Flagellar P-ring protein (Borreliella burgdorferi (strain ZS7) (Borrelia burgdorferi)).